Consider the following 299-residue polypeptide: GTPase Era (299 aa).

The region spanning 5–175 is the Era-type G domain; sequence RSGFVCLVGR…IDVLAAALPP (171 aa). The interval 13-20 is G1; sequence GRPNTGKS. 13–20 contacts GTP; that stretch reads GRPNTGKS. The segment at 39–43 is G2; the sequence is QTTRH. The tract at residues 60–63 is G3; that stretch reads DTPG. GTP-binding positions include 60 to 64 and 124 to 127; these read DTPGL and TKID. A G4 region spans residues 124–127; that stretch reads TKID. Positions 154-156 are G5; sequence VSA. The 80-residue stretch at 206–285 folds into the KH type-2 domain; the sequence is VRDELPHSLA…YLDLRVKVAK (80 aa).

This sequence belongs to the TRAFAC class TrmE-Era-EngA-EngB-Septin-like GTPase superfamily. Era GTPase family. Monomer.

It localises to the cell envelope. The protein localises to the secreted. It is found in the cell wall. Exhibits GTPase activity. Binds RNA but is probably not involved in ribosome assembly in mycobacteria. This Mycobacterium avium (strain 104) protein is GTPase Era.